A 154-amino-acid polypeptide reads, in one-letter code: Protein X (154 aa).

A mitochondrial targeting sequence region spans residues 68-117; that stretch reads PCALRFTSARRMETTVNAHRNLPKVLHKRTLGLSAMSTTDLEAYFKDCVF.

This sequence belongs to the orthohepadnavirus protein X family. In terms of assembly, may form homodimer. May interact with host CEBPA, CFLAR, CREB1, DDB1, E4F1, HBXIP, HSPD1/HSP60, NFKBIA, POLR2E and SMAD4. Interacts with host SMC5-SMC6 complex and induces its degradation. Interacts with host TRPC4AP; leading to prevent ubiquitination of TRPC4AP. Interacts with host PLSCR1; this interaction promotes ubiquitination and degradation of HBx and impairs HBx-mediated cell proliferation. In terms of processing, a fraction may be phosphorylated in insect cells and HepG2 cells, a human hepatoblastoma cell line. Phosphorylated in vitro by host protein kinase C or mitogen-activated protein kinase. N-acetylated in insect cells.

The protein localises to the host cytoplasm. It is found in the host nucleus. Its subcellular location is the host mitochondrion. Functionally, multifunctional protein that plays a role in silencing host antiviral defenses and promoting viral transcription. Does not seem to be essential for HBV infection. May be directly involved in development of cirrhosis and liver cancer (hepatocellular carcinoma). Most of cytosolic activities involve modulation of cytosolic calcium. The effect on apoptosis is controversial depending on the cell types in which the studies have been conducted. May induce apoptosis by localizing in mitochondria and causing loss of mitochondrial membrane potential. May also modulate apoptosis by binding host CFLAR, a key regulator of the death-inducing signaling complex (DISC). Promotes viral transcription by using the host E3 ubiquitin ligase DDB1 to target the SMC5-SMC6 complex to proteasomal degradation. This host complex would otherwise bind to viral episomal DNA, and prevents its transcription. Moderately stimulates transcription of many different viral and cellular transcription elements. Promoters and enhancers stimulated by HBx contain DNA binding sites for NF-kappa-B, AP-1, AP-2, c-EBP, ATF/CREB, or the calcium-activated factor NF-AT. This is Protein X from Homo sapiens (Human).